The chain runs to 403 residues: Probable protein phosphatase 2C 8 (403 aa).

Residues 42–80 form a disordered region; sequence LGRTASAVAEDDAAKRVRPASDSSSDSSESAKVAPEPTA. The span at 62-71 shows a compositional bias: low complexity; the sequence is SDSSSDSSES. In terms of domain architecture, PPM-type phosphatase spans 90 to 388; that stretch reads SHGAVSVIGR…DNISVVVVEL (299 aa). Residues D144, G145, D325, and D379 each coordinate Mn(2+).

This sequence belongs to the PP2C family. The cofactor is Mg(2+). Mn(2+) serves as cofactor.

The catalysed reaction is O-phospho-L-seryl-[protein] + H2O = L-seryl-[protein] + phosphate. The enzyme catalyses O-phospho-L-threonyl-[protein] + H2O = L-threonyl-[protein] + phosphate. This is Probable protein phosphatase 2C 8 from Oryza sativa subsp. japonica (Rice).